The sequence spans 440 residues: Chromosome partition protein MukF (440 aa).

Positions 208 to 236 (LSETSGTLRELQDTLEAAGDKLQANLLRI) are leucine-zipper.

The protein belongs to the MukF family. In terms of assembly, interacts, and probably forms a ternary complex, with MukE and MukB via its C-terminal region. The complex formation is stimulated by calcium or magnesium. It is required for an interaction between MukE and MukB.

It localises to the cytoplasm. The protein localises to the nucleoid. Its function is as follows. Involved in chromosome condensation, segregation and cell cycle progression. May participate in facilitating chromosome segregation by condensation DNA from both sides of a centrally located replisome during cell division. Not required for mini-F plasmid partitioning. Probably acts via its interaction with MukB and MukE. Overexpression results in anucleate cells. It has a calcium binding activity. The sequence is that of Chromosome partition protein MukF from Yersinia enterocolitica serotype O:8 / biotype 1B (strain NCTC 13174 / 8081).